The following is a 223-amino-acid chain: Family of serine hydrolases 2 (223 aa).

Active-site charge relay system residues include serine 110, aspartate 174, and histidine 203.

This sequence belongs to the AB hydrolase 3 family.

Its subcellular location is the cytoplasm. Functionally, serine hydrolase of unknown specificity. In Saccharomyces cerevisiae (strain ATCC 204508 / S288c) (Baker's yeast), this protein is Family of serine hydrolases 2 (FSH2).